The following is a 315-amino-acid chain: Prephenate dehydratase (315 aa).

Positions R3–R190 constitute a Prephenate dehydratase domain. Positions S204–P281 constitute an ACT domain.

As to quaternary structure, homodimer.

The catalysed reaction is prephenate + H(+) = 3-phenylpyruvate + CO2 + H2O. The protein operates within amino-acid biosynthesis; L-phenylalanine biosynthesis; phenylpyruvate from prephenate: step 1/1. This Mycobacterium sp. (strain KMS) protein is Prephenate dehydratase (pheA).